A 169-amino-acid chain; its full sequence is Ribosome-binding factor A (169 aa).

Residues 124–169 form a disordered region; sequence AGAKHAGDADPYKSDIPEDVEIDEDDFDEEDEDLIDDEELDEDGNK. The span at 128-139 shows a compositional bias: basic and acidic residues; it reads HAGDADPYKSDI. A compositionally biased stretch (acidic residues) spans 140–169; it reads PEDVEIDEDDFDEEDEDLIDDEELDEDGNK.

Belongs to the RbfA family. Monomer. Binds 30S ribosomal subunits, but not 50S ribosomal subunits or 70S ribosomes.

It is found in the cytoplasm. Its function is as follows. One of several proteins that assist in the late maturation steps of the functional core of the 30S ribosomal subunit. Associates with free 30S ribosomal subunits (but not with 30S subunits that are part of 70S ribosomes or polysomes). Required for efficient processing of 16S rRNA. May interact with the 5'-terminal helix region of 16S rRNA. This Arthrobacter sp. (strain FB24) protein is Ribosome-binding factor A.